Here is a 910-residue protein sequence, read N- to C-terminus: Periodic tryptophan protein 2 homolog (910 aa).

WD repeat units follow at residues 12 to 50, 53 to 92, 94 to 134, 144 to 183, 188 to 227, 271 to 310, 313 to 355, 358 to 397, 400 to 439, 443 to 485, 486 to 523, 525 to 563, 586 to 625, and 688 to 728; these read GTVY…SKTL, DCNY…KIYT, RSNK…KVYN, LSSD…NLFI, SHKG…GELV, GKSV…LVHN, VSEM…YVMK, AHSL…CTVT, EHTS…NFRT, PEPT…DILS, GHES…AETV, VSHE…NLGS, AKTK…ILKK, and RPEV…DPFQ. Residues 867–910 form a disordered region; that stretch reads SKKSVKKEEEEEEDVSDESDDEDIEDESAGSDDEDSDDSVEIIE. A compositionally biased stretch (acidic residues) spans 875–910; that stretch reads EEEEEDVSDESDDEDIEDESAGSDDEDSDDSVEIIE.

Belongs to the WD repeat PWP2 family.

In Caenorhabditis elegans, this protein is Periodic tryptophan protein 2 homolog.